Consider the following 306-residue polypeptide: 4-hydroxy-3-methylbut-2-enyl diphosphate reductase (306 aa).

Residue cysteine 12 coordinates [4Fe-4S] cluster. Histidine 41 and histidine 74 together coordinate (2E)-4-hydroxy-3-methylbut-2-enyl diphosphate. Dimethylallyl diphosphate-binding residues include histidine 41 and histidine 74. The isopentenyl diphosphate site is built by histidine 41 and histidine 74. Residue cysteine 96 coordinates [4Fe-4S] cluster. Histidine 124 is a binding site for (2E)-4-hydroxy-3-methylbut-2-enyl diphosphate. Histidine 124 is a binding site for dimethylallyl diphosphate. Histidine 124 lines the isopentenyl diphosphate pocket. Residue glutamate 126 is the Proton donor of the active site. Threonine 164 is a (2E)-4-hydroxy-3-methylbut-2-enyl diphosphate binding site. Residue cysteine 194 coordinates [4Fe-4S] cluster. Positions 222, 223, 224, and 266 each coordinate (2E)-4-hydroxy-3-methylbut-2-enyl diphosphate. Serine 222, serine 223, asparagine 224, and serine 266 together coordinate dimethylallyl diphosphate. Isopentenyl diphosphate-binding residues include serine 222, serine 223, asparagine 224, and serine 266.

It belongs to the IspH family. [4Fe-4S] cluster serves as cofactor.

It carries out the reaction isopentenyl diphosphate + 2 oxidized [2Fe-2S]-[ferredoxin] + H2O = (2E)-4-hydroxy-3-methylbut-2-enyl diphosphate + 2 reduced [2Fe-2S]-[ferredoxin] + 2 H(+). The catalysed reaction is dimethylallyl diphosphate + 2 oxidized [2Fe-2S]-[ferredoxin] + H2O = (2E)-4-hydroxy-3-methylbut-2-enyl diphosphate + 2 reduced [2Fe-2S]-[ferredoxin] + 2 H(+). Its pathway is isoprenoid biosynthesis; dimethylallyl diphosphate biosynthesis; dimethylallyl diphosphate from (2E)-4-hydroxy-3-methylbutenyl diphosphate: step 1/1. It participates in isoprenoid biosynthesis; isopentenyl diphosphate biosynthesis via DXP pathway; isopentenyl diphosphate from 1-deoxy-D-xylulose 5-phosphate: step 6/6. In terms of biological role, catalyzes the conversion of 1-hydroxy-2-methyl-2-(E)-butenyl 4-diphosphate (HMBPP) into a mixture of isopentenyl diphosphate (IPP) and dimethylallyl diphosphate (DMAPP). Acts in the terminal step of the DOXP/MEP pathway for isoprenoid precursor biosynthesis. The protein is 4-hydroxy-3-methylbut-2-enyl diphosphate reductase of Dechloromonas aromatica (strain RCB).